The sequence spans 79 residues: Protein SIP18 (79 aa).

Residues 1–79 (MSNMMNKFAE…DWKTYENMKK (79 aa)) form a disordered region. Residues 8–20 (FAEKLQGNDDSHQ) show a composition bias toward basic and acidic residues.

The polypeptide is Protein SIP18 (SIP18) (Saccharomyces cerevisiae (strain ATCC 204508 / S288c) (Baker's yeast)).